We begin with the raw amino-acid sequence, 237 residues long: Probable 2-phosphosulfolactate phosphatase (237 aa).

It belongs to the ComB family. Mg(2+) serves as cofactor.

It catalyses the reaction (2R)-O-phospho-3-sulfolactate + H2O = (2R)-3-sulfolactate + phosphate. The chain is Probable 2-phosphosulfolactate phosphatase from Thermus thermophilus (strain ATCC 27634 / DSM 579 / HB8).